The sequence spans 395 residues: Chaperone protein DnaJ (395 aa).

The J domain occupies 4-69 (DYYEVLGVGR…DKRRRYDQFG (66 aa)). Residues 152-233 (GVEKTLKIKK…CHGEGIKQGE (82 aa)) form a CR-type zinc finger. Positions 165, 168, 181, 184, 207, 210, 221, and 224 each coordinate Zn(2+). CXXCXGXG motif repeat units lie at residues 165–172 (CDVCNGTG), 181–188 (CPTCQGTG), 207–214 (CPTCGGEG), and 221–228 (CTACHGEG).

Belongs to the DnaJ family. As to quaternary structure, homodimer. The cofactor is Zn(2+).

The protein resides in the cytoplasm. Functionally, participates actively in the response to hyperosmotic and heat shock by preventing the aggregation of stress-denatured proteins and by disaggregating proteins, also in an autonomous, DnaK-independent fashion. Unfolded proteins bind initially to DnaJ; upon interaction with the DnaJ-bound protein, DnaK hydrolyzes its bound ATP, resulting in the formation of a stable complex. GrpE releases ADP from DnaK; ATP binding to DnaK triggers the release of the substrate protein, thus completing the reaction cycle. Several rounds of ATP-dependent interactions between DnaJ, DnaK and GrpE are required for fully efficient folding. Also involved, together with DnaK and GrpE, in the DNA replication of plasmids through activation of initiation proteins. This Prosthecochloris aestuarii (strain DSM 271 / SK 413) protein is Chaperone protein DnaJ.